The sequence spans 109 residues: Large ribosomal subunit protein uL24 (109 aa).

The protein belongs to the universal ribosomal protein uL24 family. Part of the 50S ribosomal subunit.

Functionally, one of two assembly initiator proteins, it binds directly to the 5'-end of the 23S rRNA, where it nucleates assembly of the 50S subunit. Its function is as follows. One of the proteins that surrounds the polypeptide exit tunnel on the outside of the subunit. The sequence is that of Large ribosomal subunit protein uL24 from Rickettsia bellii (strain RML369-C).